Consider the following 839-residue polypeptide: RNA-directed RNA polymerase (839 aa).

Residues proline 504–phenylalanine 619 form the RdRp catalytic domain.

It carries out the reaction RNA(n) + a ribonucleoside 5'-triphosphate = RNA(n+1) + diphosphate. RNA-dependent RNA polymerase replicates the viral genome. This is RNA-directed RNA polymerase from Groundnut rosette virus (strain MC1) (GRV).